The sequence spans 94 residues: Small ribosomal subunit protein uS17 (94 aa).

It belongs to the universal ribosomal protein uS17 family. As to quaternary structure, part of the 30S ribosomal subunit.

Functionally, one of the primary rRNA binding proteins, it binds specifically to the 5'-end of 16S ribosomal RNA. The sequence is that of Small ribosomal subunit protein uS17 from Streptomyces avermitilis (strain ATCC 31267 / DSM 46492 / JCM 5070 / NBRC 14893 / NCIMB 12804 / NRRL 8165 / MA-4680).